A 392-amino-acid chain; its full sequence is MAAWRPPRVEELLAEARRAFMEEFGAEPELAVSAPGRVNLIGEHTDYNQGLVLPMALELVTVMVGSPRTDGLVSLLTTSKDADEPQRLQFPLPSAQWSLEPGIPQWANYVKGVIQHYPASPLVGFSAVVVSSVPLGGGLSSSASLEVATYTFIQQLCPDSGAIAARAQVCQRAEHSFAGVPCGIMDQLIALLGQKGYALLIDCRSLETSLVPLSDPKLAVLITNSNVRHSLGSSEYPVRRRQCEEVAQALGKESLREVRMEELEAGRELMSKEGFRRARHVVSEIRRTAQAAAAMSRGDYKAFGRLMVESHYSLRDDYEVSCPELDQLVEAALSVPGVYGSRMTGGGFGGCTVTLLEASVAPLVIDHIQEQYSGTATFYLSQAADGAQVLSL.

Alpha-D-galactose contacts are provided by R37, E43, H44, and D46. 4 residues coordinate ATP: G136, G138, S140, and S141. D186 contacts alpha-D-galactose. The Proton acceptor role is filled by D186. S230 is subject to Phosphoserine. Alpha-D-galactose is bound at residue Y236.

It belongs to the GHMP kinase family. GalK subfamily. In terms of assembly, homodimer.

It carries out the reaction alpha-D-galactose + ATP = alpha-D-galactose 1-phosphate + ADP + H(+). It participates in carbohydrate metabolism; galactose metabolism. Catalyzes the transfer of a phosphate from ATP to alpha-D-galactose and participates in the first committed step in the catabolism of galactose. The protein is Galactokinase (Galk1) of Mus musculus (Mouse).